We begin with the raw amino-acid sequence, 311 residues long: Acetaldehyde dehydrogenase 2 (311 aa).

11–14 (SGNI) is an NAD(+) binding site. The Acyl-thioester intermediate role is filled by Cys-131. Residues 162 to 170 (SAGPGTRAN) and Asn-289 each bind NAD(+).

This sequence belongs to the acetaldehyde dehydrogenase family.

The catalysed reaction is acetaldehyde + NAD(+) + CoA = acetyl-CoA + NADH + H(+). This is Acetaldehyde dehydrogenase 2 (mhpF) from Azotobacter vinelandii (strain DJ / ATCC BAA-1303).